Consider the following 322-residue polypeptide: GTP 3',8-cyclase (322 aa).

One can recognise a Radical SAM core domain in the interval 5–217 (SYGRVIDYLR…NIIAQKYSFK (213 aa)). R14 contacts GTP. [4Fe-4S] cluster contacts are provided by C21 and C25. Y27 is an S-adenosyl-L-methionine binding site. C28 is a binding site for [4Fe-4S] cluster. R64 contributes to the GTP binding site. An S-adenosyl-L-methionine-binding site is contributed by G68. T95 contacts GTP. S119 is a binding site for S-adenosyl-L-methionine. Residue K155 participates in GTP binding. M189 provides a ligand contact to S-adenosyl-L-methionine. 2 residues coordinate [4Fe-4S] cluster: C249 and C252. Residue 254 to 256 (RIR) participates in GTP binding. Residue C266 participates in [4Fe-4S] cluster binding.

Belongs to the radical SAM superfamily. MoaA family. In terms of assembly, monomer and homodimer. Requires [4Fe-4S] cluster as cofactor.

The enzyme catalyses GTP + AH2 + S-adenosyl-L-methionine = (8S)-3',8-cyclo-7,8-dihydroguanosine 5'-triphosphate + 5'-deoxyadenosine + L-methionine + A + H(+). The protein operates within cofactor biosynthesis; molybdopterin biosynthesis. Catalyzes the cyclization of GTP to (8S)-3',8-cyclo-7,8-dihydroguanosine 5'-triphosphate. In Campylobacter lari (strain RM2100 / D67 / ATCC BAA-1060), this protein is GTP 3',8-cyclase.